The primary structure comprises 115 residues: Dolichyl-diphosphooligosaccharide--protein glycosyltransferase subunit DAD1 (115 aa).

Residues 1-31 are Cytoplasmic-facing; that stretch reads MGTSTAKEAHALIASLRSAYSATPTKLKIID. The helical transmembrane segment at 32 to 52 threads the bilayer; it reads LYVVYAILTAVVQVVYMAIVG. Over 53-55 the chain is Lumenal; the sequence is SFP. Residues 56-76 form a helical membrane-spanning segment; that stretch reads FNAFLSGVLSCTGTAVLAVCL. The Cytoplasmic portion of the chain corresponds to 77–94; the sequence is RMQVNKENREFKDLPPER. A helical membrane pass occupies residues 95 to 115; the sequence is AFADFVLCNLVLHLVIMNFLG.

Belongs to the DAD/OST2 family. In terms of assembly, component of the oligosaccharyltransferase (OST) complex.

The protein resides in the endoplasmic reticulum membrane. It functions in the pathway protein modification; protein glycosylation. Functionally, subunit of the oligosaccharyl transferase (OST) complex that catalyzes the initial transfer of a defined glycan (Glc(3)Man(9)GlcNAc(2) in eukaryotes) from the lipid carrier dolichol-pyrophosphate to an asparagine residue within an Asn-X-Ser/Thr consensus motif in nascent polypeptide chains, the first step in protein N-glycosylation. N-glycosylation occurs cotranslationally and the complex associates with the Sec61 complex at the channel-forming translocon complex that mediates protein translocation across the endoplasmic reticulum (ER). All subunits are required for a maximal enzyme activity. The chain is Dolichyl-diphosphooligosaccharide--protein glycosyltransferase subunit DAD1 (DAD1) from Picea mariana (Black spruce).